The sequence spans 262 residues: Putative hydro-lyase BLi00500/BL02808 (262 aa).

The protein belongs to the D-glutamate cyclase family.

The protein is Putative hydro-lyase BLi00500/BL02808 of Bacillus licheniformis (strain ATCC 14580 / DSM 13 / JCM 2505 / CCUG 7422 / NBRC 12200 / NCIMB 9375 / NCTC 10341 / NRRL NRS-1264 / Gibson 46).